The following is a 294-amino-acid chain: ADP-ribosyl-[dinitrogen reductase] glycohydrolase (294 aa).

ADP-D-ribose is bound by residues 100–102 (NTC), glutamate 121, histidine 158, and tyrosine 212. The Mn(2+) site is built by aspartate 243, aspartate 245, and threonine 246.

This sequence belongs to the ADP-ribosylglycohydrolase family. As to quaternary structure, monomer. Requires Mn(2+) as cofactor.

It is found in the cytoplasm. It catalyses the reaction N(omega)-alpha-(ADP-D-ribosyl)-L-arginyl-[dinitrogen reductase] + H2O = L-arginyl-[dinitrogen reductase] + ADP-D-ribose. Functionally, involved in the regulation of nitrogen fixation activity by the reversible ADP-ribosylation of one subunit of the homodimeric dinitrogenase reductase component of the nitrogenase enzyme complex. The ADP-ribosyltransferase (DraT) transfers the ADP-ribose group from NAD to dinitrogenase reductase. The ADP-ribose group is removed through the action of the ADP-ribosylglycohydrolase (DraG, this entry). The protein is ADP-ribosyl-[dinitrogen reductase] glycohydrolase of Rhodospirillum rubrum.